A 461-amino-acid polypeptide reads, in one-letter code: D-phenylhydantoinase (461 aa).

Residues H59, H61, and K151 each coordinate a divalent metal cation. Position 151 is an N6-carboxylysine (K151). Y156 serves as a coordination point for substrate. 2 residues coordinate a divalent metal cation: H182 and H239. S286 provides a ligand contact to substrate. D313 is an a divalent metal cation binding site. Residue N335 participates in substrate binding.

This sequence belongs to the metallo-dependent hydrolases superfamily. Hydantoinase/dihydropyrimidinase family. Homotetramer. A divalent metal cation serves as cofactor. Post-translationally, carboxylation allows a single lysine to coordinate two divalent metal cations.

It carries out the reaction D-5-phenylhydantoin + H2O = N-carbamoyl-D-phenylglycine + H(+). Catalyzes the stereospecific hydrolysis of the cyclic amide bond of D-hydantoin derivatives with an aromatic side chains at the 5'-position. Has no activity on dihydropyrimidines. The physiological function is unknown. The sequence is that of D-phenylhydantoinase from Escherichia coli O127:H6 (strain E2348/69 / EPEC).